The chain runs to 251 residues: DNA repair protein RecO (251 aa).

Belongs to the RecO family.

Functionally, involved in DNA repair and RecF pathway recombination. The polypeptide is DNA repair protein RecO (Macrococcus caseolyticus (strain JCSC5402) (Macrococcoides caseolyticum)).